The primary structure comprises 280 residues: Putative pyruvate, phosphate dikinase regulatory protein 1 (280 aa).

Residue 152-159 participates in ADP binding; sequence GVSRTSKT.

Belongs to the pyruvate, phosphate/water dikinase regulatory protein family. PDRP subfamily.

The enzyme catalyses N(tele)-phospho-L-histidyl/L-threonyl-[pyruvate, phosphate dikinase] + ADP = N(tele)-phospho-L-histidyl/O-phospho-L-threonyl-[pyruvate, phosphate dikinase] + AMP + H(+). The catalysed reaction is N(tele)-phospho-L-histidyl/O-phospho-L-threonyl-[pyruvate, phosphate dikinase] + phosphate + H(+) = N(tele)-phospho-L-histidyl/L-threonyl-[pyruvate, phosphate dikinase] + diphosphate. Bifunctional serine/threonine kinase and phosphorylase involved in the regulation of the pyruvate, phosphate dikinase (PPDK) by catalyzing its phosphorylation/dephosphorylation. The chain is Putative pyruvate, phosphate dikinase regulatory protein 1 from Latilactobacillus sakei subsp. sakei (strain 23K) (Lactobacillus sakei subsp. sakei).